Consider the following 769-residue polypeptide: PDZ domain-containing protein 4 (769 aa).

The 85-residue stretch at 130 to 214 (EVELYKSSHR…TNISLLVARP (85 aa)) folds into the PDZ domain. The disordered stretch occupies residues 221–315 (RWKDSDRDDF…TNTPGSLRKF (95 aa)). Over residues 229–239 (DFLDDFGSENE) the composition is skewed to acidic residues. At Ser236 the chain carries Phosphoserine. The segment covering 282-298 (RTDESTRNEESSEHDLL) has biased composition (basic and acidic residues). Residues 389-419 (VNRNESLGHEMAMLEEELRHLEFKCRNILRA) adopt a coiled-coil conformation. The interval 445 to 579 (ASEPKKHELS…RHRGQGQEGE (135 aa)) is disordered. Basic and acidic residues predominate over residues 447 to 467 (EPKKHELSDISELPEKSDKDS). At Ser454 the chain carries Phosphoserine. Positions 468–479 (TSAYNTGESCRS) are enriched in polar residues. Over residues 530–547 (LSRDPEAGRRQHAEERGR) the composition is skewed to basic and acidic residues.

As to expression, brain-specific. Expressed in fetal and adult brain. Up-regulated in synovial carcinomas.

The protein resides in the cytoplasm. It is found in the cell cortex. This is PDZ domain-containing protein 4 (PDZD4) from Homo sapiens (Human).